The chain runs to 258 residues: Acidic leucine-rich nuclear phosphoprotein 32 family member E (258 aa).

Methionine 1 is subject to N-acetylmethionine. 4 LRR repeats span residues 18 to 38, 43 to 64, 65 to 87, and 89 to 110; these read EVTE…EGLN, ELEF…PSLN, KLRK…AEKC, and NLTY…EALQ. Residue lysine 68 forms a Glycyl lysine isopeptide (Lys-Gly) (interchain with G-Cter in SUMO2) linkage. An LRRCT domain is found at 123–161; the sequence is CEITNLEDYRESIFELLQQITYLDGFDQEDNEAPDSEEE. Acidic residues-rich tracts occupy residues 149–206 and 216–238; these read DQED…EEEV and IQDE…EEEE. The interval 149–258 is disordered; it reads DQEDNEAPDS…AEDDGEEDDD (110 aa). The tract at residues 205–258 is ZID domain; the sequence is EVGLSYLMKEEIQDEEDDDDYVDEGEEEEEEEEEGPRGEKRKRDAEDDGEEDDD. Residues 239-249 are compositionally biased toward basic and acidic residues; it reads GPRGEKRKRDA.

The protein belongs to the ANP32 family. In terms of assembly, component of a SWR1-like complex, composed of EP400, KAT5/TIP60, TRRAP, BRD8, RUVBL1, RUVBL2, ING3 and ANP32E; the complex does not contain SRCAP. Interacts with H2A.Z/H2AZ1. Interacts with the importin alpha KPNA1 and KPNA2. In terms of processing, phosphorylated. The phosphorylation is nuclear localization signal (NLS)-dependent.

The protein localises to the cytoplasm. It is found in the nucleus. In terms of biological role, histone chaperone that specifically mediates the genome-wide removal of histone H2A.Z/H2AZ1 from the nucleosome: removes H2A.Z/H2AZ1 from its normal sites of deposition, especially from enhancer and insulator regions. Not involved in deposition of H2A.Z/H2AZ1 in the nucleosome. May stabilize the evicted H2A.Z/H2AZ1-H2B dimer, thus shifting the equilibrium towards dissociation and the off-chromatin state. Inhibits activity of protein phosphatase 2A (PP2A). Does not inhibit protein phosphatase 1. May play a role in cerebellar development and synaptogenesis. The sequence is that of Acidic leucine-rich nuclear phosphoprotein 32 family member E (Anp32e) from Rattus norvegicus (Rat).